The primary structure comprises 152 residues: Superoxide dismutase [Cu-Zn] 1 (152 aa).

Histidine 45, histidine 47, and histidine 62 together coordinate Cu cation. A disulfide bridge connects residues cysteine 56 and cysteine 145. Histidine 62, histidine 70, histidine 79, and aspartate 82 together coordinate Zn(2+). Histidine 119 provides a ligand contact to Cu cation.

Belongs to the Cu-Zn superoxide dismutase family. In terms of assembly, homodimer. Interacts with DJ1A and CCS. Cu cation is required as a cofactor. It depends on Zn(2+) as a cofactor. Expressed in leaves (at protein level). The spatial localization is regulated by miR398-mediated silencing. Mostly present in flowers, old rosette leaves and inflorescence, and, to a lower extent, in cauline leaves, stems and roots.

It localises to the cytoplasm. It is found in the cytosol. The protein localises to the nucleus. It catalyses the reaction 2 superoxide + 2 H(+) = H2O2 + O2. Destroys radicals which are normally produced within the cells and which are toxic to biological systems. This is Superoxide dismutase [Cu-Zn] 1 (CSD1) from Arabidopsis thaliana (Mouse-ear cress).